The sequence spans 155 residues: CASP-like protein 5B2 (155 aa).

Residues 1-18 (MWEVAWWRPGTWGGLAMR) are Cytoplasmic-facing. Residues 19 to 39 (VGQVAFAGASIGVMASGAGFA) form a helical membrane-spanning segment. Asparagine 40 carries N-linked (GlcNAc...) asparagine glycosylation. Topologically, residues 40–43 (NYTA) are extracellular. A helical membrane pass occupies residues 44-64 (FCYLIASMGLQSLWSLGLACL). Over 65-77 (DVYALTVKRDLNN) the chain is Cytoplasmic. The helical transmembrane segment at 78-98 (ALLVSLFVIGDWVTALLSFAA) threads the bilayer. The Extracellular portion of the chain corresponds to 99 to 128 (SCSAGGVMVLFKRDVLFCRRYPQLPCGRFE). A helical membrane pass occupies residues 129–149 (LAVALAFLSWALSATSAIIMF). The Cytoplasmic segment spans residues 150-155 (CLLAAF).

Belongs to the Casparian strip membrane proteins (CASP) family. As to quaternary structure, homodimer and heterodimers.

Its subcellular location is the cell membrane. This is CASP-like protein 5B2 from Oryza sativa subsp. indica (Rice).